Consider the following 65-residue polypeptide: DNA-directed RNA polymerase subunit omega (65 aa).

It belongs to the RNA polymerase subunit omega family. As to quaternary structure, the RNAP catalytic core consists of 2 alpha, 1 beta, 1 beta' and 1 omega subunit. When a sigma factor is associated with the core the holoenzyme is formed, which can initiate transcription.

The enzyme catalyses RNA(n) + a ribonucleoside 5'-triphosphate = RNA(n+1) + diphosphate. Its function is as follows. Promotes RNA polymerase assembly. Latches the N- and C-terminal regions of the beta' subunit thereby facilitating its interaction with the beta and alpha subunits. The chain is DNA-directed RNA polymerase subunit omega from Finegoldia magna (strain ATCC 29328 / DSM 20472 / WAL 2508) (Peptostreptococcus magnus).